The primary structure comprises 555 residues: Formate--tetrahydrofolate ligase (555 aa).

64 to 71 (TKAGIGKT) contributes to the ATP binding site.

This sequence belongs to the formate--tetrahydrofolate ligase family.

The enzyme catalyses (6S)-5,6,7,8-tetrahydrofolate + formate + ATP = (6R)-10-formyltetrahydrofolate + ADP + phosphate. Its pathway is one-carbon metabolism; tetrahydrofolate interconversion. This chain is Formate--tetrahydrofolate ligase, found in Phocaeicola vulgatus (strain ATCC 8482 / DSM 1447 / JCM 5826 / CCUG 4940 / NBRC 14291 / NCTC 11154) (Bacteroides vulgatus).